Here is a 172-residue protein sequence, read N- to C-terminus: Ribosome maturation factor RimM (172 aa).

The PRC barrel domain maps to 100 to 172; the sequence is PGEYYRVDLV…RIVVDWDPGF (73 aa).

The protein belongs to the RimM family. Binds ribosomal protein uS19.

The protein localises to the cytoplasm. In terms of biological role, an accessory protein needed during the final step in the assembly of 30S ribosomal subunit, possibly for assembly of the head region. Essential for efficient processing of 16S rRNA. May be needed both before and after RbfA during the maturation of 16S rRNA. It has affinity for free ribosomal 30S subunits but not for 70S ribosomes. This Methylococcus capsulatus (strain ATCC 33009 / NCIMB 11132 / Bath) protein is Ribosome maturation factor RimM.